Here is a 547-residue protein sequence, read N- to C-terminus: MAAKDVVFGDAARAKMVEGVNILANAVKVTLGPKGRNVVLERSFGGPTVTKDGVSVAKEIELKDKLQNMGAQMVKEVASKTSDNAGDGTTTATVLAQSIVREGMKYVAAGMNPMDLKRGIDKAVAAAVEELKKISKPTTTSKEIAQVGAISANSDESIGARIAEAMDKVGKEGVITVEDGKSLEDELDVVEGMQFDRGYLSPYFINNPEKQVVQLDNPFVLLFDKKISNIRDLLPVLEQVAKAGRPLLIVAEDVEGEALATLVVNNIRGILKTAAVKAPGFGDRRKAMLEDIAILTGGQVIAEEVGLTLEKATLNDLGQAKRVEIGKENTTIIDGAGDARNIEARVKQVRAQIEEATSDYDREKLQERVAKLAGGVAVIKVGAATEVEMKEKKARVEDALHATRAAVEEGIVAGGGVALLRARALISGLKGANADQDAGIKIVLRAMEEPLRQIVTNAGDEASVVVANVIAGKGNYGYNASTGEYGDLVEMGVLDPTKVTRTALQNAASVASLMLTTDCAVAELPKDDAAPAMPGGMGGMGGMDGMM.

ATP-binding positions include 30 to 33 (TLGP), Lys51, 87 to 91 (DGTTT), Gly415, and Asp495.

This sequence belongs to the chaperonin (HSP60) family. Forms a cylinder of 14 subunits composed of two heptameric rings stacked back-to-back. Interacts with the co-chaperonin GroES.

Its subcellular location is the cytoplasm. The catalysed reaction is ATP + H2O + a folded polypeptide = ADP + phosphate + an unfolded polypeptide.. Functionally, together with its co-chaperonin GroES, plays an essential role in assisting protein folding. The GroEL-GroES system forms a nano-cage that allows encapsulation of the non-native substrate proteins and provides a physical environment optimized to promote and accelerate protein folding. In Ralstonia nicotianae (strain ATCC BAA-1114 / GMI1000) (Ralstonia solanacearum), this protein is Chaperonin GroEL.